Reading from the N-terminus, the 313-residue chain is 2,3-dihydroxyphenylpropionate/2,3-dihydroxicinnamic acid 1,2-dioxygenase (313 aa).

Histidine 115 functions as the Proton donor in the catalytic mechanism. Histidine 179 (proton acceptor) is an active-site residue.

This sequence belongs to the LigB/MhpB extradiol dioxygenase family. As to quaternary structure, homotetramer. It depends on Fe(2+) as a cofactor.

The enzyme catalyses 3-(2,3-dihydroxyphenyl)propanoate + O2 = (2Z,4E)-2-hydroxy-6-oxonona-2,4-dienedioate + H(+). It carries out the reaction (2E)-3-(2,3-dihydroxyphenyl)prop-2-enoate + O2 = (2Z,4E,7E)-2-hydroxy-6-oxonona-2,4,7-trienedioate + H(+). It functions in the pathway aromatic compound metabolism; 3-phenylpropanoate degradation. Functionally, catalyzes the non-heme iron(II)-dependent oxidative cleavage of 2,3-dihydroxyphenylpropionic acid and 2,3-dihydroxicinnamic acid into 2-hydroxy-6-ketononadienedioate and 2-hydroxy-6-ketononatrienedioate, respectively. This chain is 2,3-dihydroxyphenylpropionate/2,3-dihydroxicinnamic acid 1,2-dioxygenase, found in Xanthobacter autotrophicus (strain ATCC BAA-1158 / Py2).